Consider the following 246-residue polypeptide: Putative 4'-phosphopantetheinyl transferase slr0495 (246 aa).

Residues aspartate 110 and glutamate 156 each contribute to the Mg(2+) site.

Belongs to the P-Pant transferase superfamily. Gsp/Sfp/HetI/AcpT family. Mg(2+) is required as a cofactor.

Functionally, probably transfers the 4'-phosphopantetheine moiety from coenzyme A (CoA) to a serine residue of a carrier protein domain. The sequence is that of Putative 4'-phosphopantetheinyl transferase slr0495 from Synechocystis sp. (strain ATCC 27184 / PCC 6803 / Kazusa).